The sequence spans 214 residues: MSLGLIGRKVGMTRIFTDEGESVPVTVLEVVPNRVTQIKTAASDGYTSLQVAYGERRASRIGKALAGHYAKAGVSAGAGIKEFPVSDDVLANYSVGGQITVELFQPGQLVDVTGTSLGKGFSGAIKRHNFSSNRASHGNSRSHNVPGSIGMAQDPGRVFPGKRMPGHLGAVKTTVQNLEIVRVDAERNLLLIKGAVPGSKGGDVVVRPSVKVKA.

Gln-153 carries the N5-methylglutamine modification.

It belongs to the universal ribosomal protein uL3 family. In terms of assembly, part of the 50S ribosomal subunit. Forms a cluster with proteins L14 and L19. Methylated by PrmB.

In terms of biological role, one of the primary rRNA binding proteins, it binds directly near the 3'-end of the 23S rRNA, where it nucleates assembly of the 50S subunit. The protein is Large ribosomal subunit protein uL3 of Methylobacillus flagellatus (strain ATCC 51484 / DSM 6875 / VKM B-1610 / KT).